We begin with the raw amino-acid sequence, 938 residues long: Translation initiation factor IF-2 (938 aa).

The interval 55-322 (KAEASAAPAA…RKSKRARRQE (268 aa)) is disordered. Low complexity-rich tracts occupy residues 57 to 68 (EASAAPAAPAEK) and 77 to 117 (KKAA…AAAP). Pro residues predominate over residues 118 to 136 (KPGPKPAPVAEQPAPPAEP). Low complexity-rich tracts occupy residues 141 to 153 (APEA…APAA), 180 to 198 (GMGR…AGDN), and 224 to 233 (MMPKSPSAFG). Gly residues predominate over residues 247 to 293 (PGRGGAPGRGGAPGRGGVGTGAPGRGGAPGGGFGPSGGGRPGGGRPG). Residues 310-319 (RRGRKSKRAR) show a composition bias toward basic residues. The tr-type G domain maps to 431 to 603 (ARPPVVTVMG…VVLTADASLD (173 aa)). The interval 440–447 (GHVDHGKT) is G1. 440 to 447 (GHVDHGKT) serves as a coordination point for GTP. Residues 465–469 (GITQH) are G2. The G3 stretch occupies residues 490–493 (DTPG). Residues 490–494 (DTPGH) and 544–547 (NKID) each bind GTP. A G4 region spans residues 544 to 547 (NKID). A G5 region spans residues 580 to 582 (SAK).

It belongs to the TRAFAC class translation factor GTPase superfamily. Classic translation factor GTPase family. IF-2 subfamily.

The protein localises to the cytoplasm. Functionally, one of the essential components for the initiation of protein synthesis. Protects formylmethionyl-tRNA from spontaneous hydrolysis and promotes its binding to the 30S ribosomal subunits. Also involved in the hydrolysis of GTP during the formation of the 70S ribosomal complex. This Nocardioides sp. (strain ATCC BAA-499 / JS614) protein is Translation initiation factor IF-2.